The primary structure comprises 464 residues: GPI mannosyltransferase 2 (464 aa).

The Cytoplasmic portion of the chain corresponds to 1 to 70 (MYYIGHPSYY…MTRSGYNYFK (70 aa)). Residues 71-91 (GICVCTFLLSTILYLGIAVIM) form a helical membrane-spanning segment. Residues 92–166 (SHLCVFDDTA…ISFLAFRSKD (75 aa)) lie on the Lumenal side of the membrane. Residues N108 and N139 are each glycosylated (N-linked (GlcNAc...) asparagine). A helical transmembrane segment spans residues 167–187 (VVLLGIVSCFASIFFHAIACY). Over 188-219 (ALYLLTKSIFSNQKMTAYTVIFYCFSPSGIYM) the chain is Cytoplasmic. Residues 220 to 240 (SVGYTESLFAAFSFLGLLLFI) traverse the membrane as a helical segment. Residues 241–260 (KKQQYPAAFLWSLATLIRSN) are Lumenal-facing. A helical transmembrane segment spans residues 261–281 (GIFWCIFFGMPAIGTLKISLE). Topologically, residues 282–289 (RLQLTFMQ) are cytoplasmic. A helical membrane pass occupies residues 290–309 (VSQLVGYGTKCLIILVPFFY). Residues 310–356 (NQYLGFKLFCPGVAWCNKSLPLIYPAVQEKYWNVGFLRYWTLNNIPN) lie on the Lumenal side of the membrane. N-linked (GlcNAc...) asparagine glycosylation is present at N326. The helical transmembrane segment at 357-377 (FLFALLSIIPILFALFYSISG) threads the bilayer. The Cytoplasmic segment spans residues 378 to 388 (STLHSFRSIKS). A helical transmembrane segment spans residues 389–409 (HLVLSALYLYIGCFHMHTQVL). Topologically, residues 410-440 (NRMSSALPLLYWSMAHATLYAKSRNLKAFGH) are lumenal. Residues 441-461 (CILFVWIVYTVIQAGLYGSFL) traverse the membrane as a helical segment. Residues 462–464 (PPA) are Cytoplasmic-facing.

Belongs to the PIGV family. In terms of assembly, part of the GPI mannosyltransferase 2 complex composed of gpi18 and C167.09.

The protein localises to the endoplasmic reticulum membrane. The protein operates within glycolipid biosynthesis; glycosylphosphatidylinositol-anchor biosynthesis. Its function is as follows. Mannosyltransferase involved in glycosylphosphatidylinositol-anchor biosynthesis. Responsible for the transfer of the second mannose to the glycosylphosphatidylinositol during GPI precursor assembly. This chain is GPI mannosyltransferase 2 (gpi18), found in Schizosaccharomyces pombe (strain 972 / ATCC 24843) (Fission yeast).